We begin with the raw amino-acid sequence, 363 residues long: Fructose-bisphosphate aldolase, muscle type (363 aa).

2 residues coordinate substrate: arginine 56 and lysine 147. The active-site Schiff-base intermediate with dihydroxyacetone-P is lysine 230.

This sequence belongs to the class I fructose-bisphosphate aldolase family. Homotetramer. As to expression, expressed mainly in the skeletal muscle, heart muscle, brain, and some other tissues, but probably not in liver.

The enzyme catalyses beta-D-fructose 1,6-bisphosphate = D-glyceraldehyde 3-phosphate + dihydroxyacetone phosphate. It functions in the pathway carbohydrate degradation; glycolysis; D-glyceraldehyde 3-phosphate and glycerone phosphate from D-glucose: step 4/4. This Lethenteron camtschaticum (Japanese lamprey) protein is Fructose-bisphosphate aldolase, muscle type.